Here is a 396-residue protein sequence, read N- to C-terminus: Elongation factor Tu (396 aa).

A tr-type G domain is found at 10–206; that stretch reads KPHCNIGTIG…AVDSYIPQPE (197 aa). Residues 19–26 are G1; sequence GHVDHGKT. 19–26 serves as a coordination point for GTP; the sequence is GHVDHGKT. Thr-26 contacts Mg(2+). The interval 60–64 is G2; that stretch reads GITIS. The interval 81–84 is G3; the sequence is DCPG. GTP is bound by residues 81 to 85 and 136 to 139; these read DCPGH and NKVD. The G4 stretch occupies residues 136-139; it reads NKVD. The G5 stretch occupies residues 174-176; it reads SAV.

This sequence belongs to the TRAFAC class translation factor GTPase superfamily. Classic translation factor GTPase family. EF-Tu/EF-1A subfamily. As to quaternary structure, monomer.

The protein resides in the cytoplasm. It catalyses the reaction GTP + H2O = GDP + phosphate + H(+). GTP hydrolase that promotes the GTP-dependent binding of aminoacyl-tRNA to the A-site of ribosomes during protein biosynthesis. The chain is Elongation factor Tu from Rhizorhabdus wittichii (strain DSM 6014 / CCUG 31198 / JCM 15750 / NBRC 105917 / EY 4224 / RW1) (Sphingomonas wittichii).